A 331-amino-acid polypeptide reads, in one-letter code: NADH-cytochrome b5 reductase 2 (331 aa).

A helical membrane pass occupies residues 36–56 (VGILIASAVGMAGFGTYFMFG). The FAD-binding FR-type domain maps to 80-185 (KGFVSLQLDD…KGPLPKYEWS (106 aa)). Position 188-223 (188-223 (KHPHVAMIAGGTGITPMYQIMRAIFKNPADKTKVTL)) interacts with FAD.

It belongs to the flavoprotein pyridine nucleotide cytochrome reductase family. Requires FAD as cofactor.

It localises to the mitochondrion outer membrane. The enzyme catalyses 2 Fe(III)-[cytochrome b5] + NADH = 2 Fe(II)-[cytochrome b5] + NAD(+) + H(+). May mediate the reduction of outer membrane cytochrome b5. The chain is NADH-cytochrome b5 reductase 2 (MCR1) from Pyricularia oryzae (strain 70-15 / ATCC MYA-4617 / FGSC 8958) (Rice blast fungus).